The sequence spans 459 residues: ATP synthase subunit beta (459 aa).

Position 148–155 (148–155 (GGAGVGKT)) interacts with ATP.

This sequence belongs to the ATPase alpha/beta chains family. F-type ATPases have 2 components, CF(1) - the catalytic core - and CF(0) - the membrane proton channel. CF(1) has five subunits: alpha(3), beta(3), gamma(1), delta(1), epsilon(1). CF(0) has three main subunits: a(1), b(2) and c(9-12). The alpha and beta chains form an alternating ring which encloses part of the gamma chain. CF(1) is attached to CF(0) by a central stalk formed by the gamma and epsilon chains, while a peripheral stalk is formed by the delta and b chains.

It localises to the cell inner membrane. It carries out the reaction ATP + H2O + 4 H(+)(in) = ADP + phosphate + 5 H(+)(out). Produces ATP from ADP in the presence of a proton gradient across the membrane. The catalytic sites are hosted primarily by the beta subunits. The protein is ATP synthase subunit beta of Ruthia magnifica subsp. Calyptogena magnifica.